The sequence spans 131 residues: Profilin-3 (131 aa).

Cys13 and Cys115 are oxidised to a cystine. The Involved in PIP2 interaction signature appears at 81-97 (AVIRGKKGSGGITIKKT). A Phosphothreonine modification is found at Thr111.

It belongs to the profilin family. As to quaternary structure, occurs in many kinds of cells as a complex with monomeric actin in a 1:1 ratio. In terms of processing, phosphorylated by MAP kinases.

The protein localises to the cytoplasm. It is found in the cytoskeleton. Binds to actin and affects the structure of the cytoskeleton. At high concentrations, profilin prevents the polymerization of actin, whereas it enhances it at low concentrations. This chain is Profilin-3, found in Olea europaea (Common olive).